The sequence spans 473 residues: RUN domain-containing protein 3B (473 aa).

Residues 1-24 form a disordered region; the sequence is MASRSLGGLSGIRGGGGGGGKKSL. Gly residues predominate over residues 8-21; sequence GLSGIRGGGGGGGK. At R13 the chain carries Omega-N-methylarginine. Residues 57–206 form the RUN domain; that stretch reads DDSSPEFNNF…IDFSFCLKGE (150 aa). Residues S232 and S233 each carry the phosphoserine modification. A coiled-coil region spans residues 317–342; it reads AHKLEKEQLEYIIVELQDQLTVLKNN. Positions 399–422 are enriched in polar residues; sequence SLSQTSLDPGQSQEGDGKQDTLNV. Residues 399-428 form a disordered region; it reads SLSQTSLDPGQSQEGDGKQDTLNVMSEGKE.

It belongs to the RUNDC3 family. In terms of assembly, interacts with RAP2A. As to expression, isoform 2 is expressed at high levels in brain, thymus, ovary, testis, leukocyte, liver, small intestine and prostate. Isoform 1 is expressed in the brain, testis and adrenal gland. It is activated in tumorigenic breast cancer cell lines and in the primary tumor of breast cancer patients. Activation also correlates with metastatic lymph node invasion and can be detected in metastatic epithelial cells from the lymph nodes and in the bone marrow of patients.

This chain is RUN domain-containing protein 3B (RUNDC3B), found in Homo sapiens (Human).